The primary structure comprises 28 residues: uncharacterized protein (28 aa).

Basic residues predominate over residues 1 to 18; it reads MLPRKYKPAYKKQAHRVK. Positions 1 to 28 are disordered; the sequence is MLPRKYKPAYKKQAHRVKSNPQPAYTFQ. Residues 19 to 28 are compositionally biased toward polar residues; the sequence is SNPQPAYTFQ.

This is an uncharacterized protein from Saccharomyces cerevisiae (strain ATCC 204508 / S288c) (Baker's yeast).